The following is a 412-amino-acid chain: Divalent metal cation transporter MntH (412 aa).

Topologically, residues 1–19 (MTNYRVESSSGRAARKMRL) are cytoplasmic. A helical membrane pass occupies residues 20–39 (ALMGPAFIAAIGYIDPGNFA). The Periplasmic portion of the chain corresponds to 40–51 (TNIQAGASFGYQ). The chain crosses the membrane as a helical span at residues 52–71 (LLWVVVWANLMAMLIQILSA). At 72–95 (KLGIATGKNLAEQIRDHYPRPVVW) the chain is on the cytoplasmic side. The helical transmembrane segment at 96-118 (FYWVQAEIIAMATDLAEFIGAAI) threads the bilayer. Residues 119–125 (GFKLILG) are Periplasmic-facing. A helical transmembrane segment spans residues 126-145 (VSLLQGAVLTGIATFLILML). The Cytoplasmic segment spans residues 146–155 (QRRGQKPLEK). The chain crosses the membrane as a helical span at residues 156-175 (VIGGLLLFVAAAYIVELIFS). Residues 176–196 (QPNLAQLGKGMVIPSLPTSEA) are Periplasmic-facing. A helical transmembrane segment spans residues 197 to 220 (VFLAAGVLGATIMPHVIYLHSSLT). The Cytoplasmic portion of the chain corresponds to 221-238 (QHLHGGSRQQRYSATKWD). Residues 239–258 (VAIAMTIAGFVNLVMMATAA) traverse the membrane as a helical segment. Residues 259 to 276 (AAFHFSGHTGVADLDEAY) are Periplasmic-facing. Residues 277-297 (LTLQPLLSHAAATVFGLSLVA) form a helical membrane-spanning segment. Topologically, residues 298-327 (AGLSSTVVGTLAGQVVMQGFIRFHIPLWVR) are cytoplasmic. A helical transmembrane segment spans residues 328–344 (RTVTMLPSFIVILMGLD). Residues 345–350 (PTRILV) are Periplasmic-facing. A helical transmembrane segment spans residues 351–370 (MSQVLLSFGIALALVPLLIF). The Cytoplasmic portion of the chain corresponds to 371–387 (TSDSKLMGDLVNSKRVK). Residues 388–406 (QTGWVIVVLVVALNIWLLV) traverse the membrane as a helical segment. Over 407–412 (GTALGL) the chain is Periplasmic.

This sequence belongs to the NRAMP family.

It localises to the cell inner membrane. Functionally, h(+)-stimulated, divalent metal cation uptake system. The sequence is that of Divalent metal cation transporter MntH from Shigella flexneri serotype 5b (strain 8401).